We begin with the raw amino-acid sequence, 355 residues long: MSTPSAPHGDLTDMKAILAKVAAGNALNEAEASLAFDIIMSGNATPSQMGGFLMALRVRGETVDEITGAARVMRAKAIPVEAPDGTIDTCGTGGDGSGTYNISTAAAVVIAACGVPVAKHGNRAMSSKSGAADVLGALGVNLDCDLGLVRKALWDARIGFLMAPRHHLAMRNVGPTRVGTRTIFNLLGPLSNPASAKRQLLGVYAKQWVEPLAHVLKRLGSEAAWIVHGSDGLDEITTTGPTTVAQLKDGEVTVFEIEPEQAGIFRARPELLKGGDAHVNAEAIRALFDGAQGAYRDIVLLNAAAALHVAGKAGDLKEGDERARHAIDSGAARAVLQHLVSITNSSITNEPVAAP.

5-phospho-alpha-D-ribose 1-diphosphate-binding positions include glycine 91, 94–95, threonine 99, 101–104, 119–127, and alanine 131; these read GD, NIST, and KHGNRAMSS. Residue glycine 91 coordinates anthranilate. Residue serine 103 coordinates Mg(2+). Asparagine 122 lines the anthranilate pocket. Residue arginine 177 participates in anthranilate binding. Mg(2+) contacts are provided by aspartate 234 and glutamate 235.

The protein belongs to the anthranilate phosphoribosyltransferase family. Homodimer. It depends on Mg(2+) as a cofactor.

The catalysed reaction is N-(5-phospho-beta-D-ribosyl)anthranilate + diphosphate = 5-phospho-alpha-D-ribose 1-diphosphate + anthranilate. It functions in the pathway amino-acid biosynthesis; L-tryptophan biosynthesis; L-tryptophan from chorismate: step 2/5. In terms of biological role, participates in the tryptophan-dependent indole-3-acetic acid production, which is a phytohormone released by A.brasilense. Functionally, catalyzes the transfer of the phosphoribosyl group of 5-phosphorylribose-1-pyrophosphate (PRPP) to anthranilate to yield N-(5'-phosphoribosyl)-anthranilate (PRA). The polypeptide is Anthranilate phosphoribosyltransferase (Azospirillum brasilense).